The chain runs to 352 residues: B1 bradykinin receptor (352 aa).

The Extracellular portion of the chain corresponds to 1–41 (MAAQTLLELQPSNQSQLSALNTTSCDNAREAWDLLYQVLPI). N-linked (GlcNAc...) asparagine glycosylation is found at Asn-13 and Asn-21. The helical transmembrane segment at 42-62 (FILTICAFGLLGNLFVLSVFL) threads the bilayer. The Cytoplasmic segment spans residues 63 to 72 (LLRRRLTVAE). The chain crosses the membrane as a helical span at residues 73-93 (IYLVNLAASDLVFVLGLPFWA). Over 94 to 110 (QNIWNQFNWPFGDLLCR) the chain is Extracellular. A disulfide bond links Cys-109 and Cys-188. Residues 111 to 131 (VVNGVIKANLFISIFLMVAIS) traverse the membrane as a helical segment. The Cytoplasmic segment spans residues 132 to 153 (QDRYCVLVHPMASRRRRRRRRA). Residues 154-174 (RATCMVIWAVGALLSTPTFLL) form a helical membrane-spanning segment. At 175–206 (RSVSAVQDLNISACILLLPHQAWHVARIVELN) the chain is on the extracellular side. A glycan (N-linked (GlcNAc...) asparagine) is linked at Asn-184. The chain crosses the membrane as a helical span at residues 207 to 227 (VLGFLLPLAAIIFFNGHILAS). The Cytoplasmic segment spans residues 228-250 (LRGQGEVSQTRIGGPKDCKTTVL). A helical membrane pass occupies residues 251-271 (ILTLVAAFLVCWAPYHCFAFL). The Extracellular portion of the chain corresponds to 272–294 (EFLFQVRAVRGCFWEDFIDLGLQ). A helical transmembrane segment spans residues 295 to 315 (LANFFAFTNSCLNPVIYVFVG). At 316–326 (RLFRTKVWELY) the chain is on the cytoplasmic side. Residue Cys-329 is the site of S-palmitoyl cysteine attachment.

The protein belongs to the G-protein coupled receptor 1 family. Bradykinin receptor subfamily. BDKRB1 sub-subfamily.

The protein resides in the cell membrane. Its function is as follows. This is a receptor for bradykinin. Could be a factor in chronic pain and inflammation. In Tupaia minor (Pigmy tree shrew), this protein is B1 bradykinin receptor (BDKRB1).